Here is a 291-residue protein sequence, read N- to C-terminus: N-acetylmannosamine kinase (291 aa).

ATP contacts are provided by residues 5–12 (AIDIGGTK) and 132–139 (GVGGGVVC). Residues H156, C166, C168, and C173 each coordinate Zn(2+).

Belongs to the ROK (NagC/XylR) family. NanK subfamily. Homodimer.

The enzyme catalyses an N-acyl-D-mannosamine + ATP = an N-acyl-D-mannosamine 6-phosphate + ADP + H(+). The protein operates within amino-sugar metabolism; N-acetylneuraminate degradation; D-fructose 6-phosphate from N-acetylneuraminate: step 2/5. Its function is as follows. Catalyzes the phosphorylation of N-acetylmannosamine (ManNAc) to ManNAc-6-P. The sequence is that of N-acetylmannosamine kinase from Salmonella dublin (strain CT_02021853).